We begin with the raw amino-acid sequence, 62 residues long: MDMKKLIERINFLYKKSKEEVLTEEEKIEQQKLRREYIDIIKGNVKVQLEGVEKIPTPNRKN.

The protein belongs to the UPF0291 family.

Its subcellular location is the cytoplasm. The sequence is that of UPF0291 protein CLJ_B2839 from Clostridium botulinum (strain 657 / Type Ba4).